Here is a 473-residue protein sequence, read N- to C-terminus: H(+)/Cl(-) exchange transporter ClcA (473 aa).

Over Met-1–Pro-32 the chain is Cytoplasmic. A helical membrane pass occupies residues Leu-33–Val-69. Residues His-70–Pro-76 are Periplasmic-facing. A helical transmembrane segment spans residues Leu-77–Tyr-100. Positions Gly-106 to Pro-110 match the Selectivity filter part_1 motif. Ser-107 is a chloride binding site. An intramembrane region (helical) is located at residues Ile-109–Leu-116. Over Glu-117 to Arg-123 the chain is Cytoplasmic. 2 helical membrane-spanning segments follow: residues Trp-124–Gly-141 and Glu-148–Phe-166. A Selectivity filter part_2 motif is present at residues Gly-146 to Pro-150. Residues Arg-167–Thr-176 lie on the Cytoplasmic side of the membrane. Intramembrane regions (helical) lie at residues Leu-177–Ala-189 and Pro-193–Ile-201. Residues Glu-202 to Ser-214 are Cytoplasmic-facing. A helical membrane pass occupies residues Ile-215–Phe-232. Topologically, residues Asn-233–Leu-252 are periplasmic. Residues Trp-253–His-281 form a helical membrane-spanning segment. Residues Arg-282 to Asn-287 lie on the Cytoplasmic side of the membrane. Residues Ile-288–Ala-309 traverse the membrane as a helical segment. Residues Pro-310–Ser-329 are Periplasmic-facing. 2 consecutive transmembrane segments (helical) span residues Met-330–Ser-349 and Gly-355–Val-376. The Selectivity filter part_3 motif lies at Gly-355 to Pro-359. Positions 356 and 357 each coordinate chloride. Topologically, residues Glu-377–Ala-386 are periplasmic. The segment at residues Gly-387–Ser-401 is an intramembrane region (helical). An intramembrane region (note=Loop between two helices) is located at residues Ile-402 to Ala-404. The segment at residues Pro-405–Thr-416 is an intramembrane region (helical). Residues Asp-417 to Leu-421 constitute an intramembrane region (note=Loop between two helices). Residues Ile-422–Phe-438 traverse the membrane as a helical segment. The Cytoplasmic portion of the chain corresponds to Thr-439–Thr-473. Chloride is bound at residue Tyr-445.

It belongs to the chloride channel (TC 2.A.49) family. ClcA subfamily. As to quaternary structure, homodimer.

The protein resides in the cell inner membrane. The catalysed reaction is 2 chloride(in) + H(+)(out) = 2 chloride(out) + H(+)(in). In terms of biological role, proton-coupled chloride transporter. Functions as antiport system and exchanges two chloride ions for 1 proton. Probably acts as an electrical shunt for an outwardly-directed proton pump that is linked to amino acid decarboxylation, as part of the extreme acid resistance (XAR) response. The sequence is that of H(+)/Cl(-) exchange transporter ClcA from Escherichia coli O157:H7.